Here is a 239-residue protein sequence, read N- to C-terminus: Carboxy-S-adenosyl-L-methionine synthase (239 aa).

Residues Tyr35, 64 to 66 (GCS), 88 to 89 (DN), and Arg195 contribute to the S-adenosyl-L-methionine site.

This sequence belongs to the class I-like SAM-binding methyltransferase superfamily. Cx-SAM synthase family. As to quaternary structure, homodimer.

It catalyses the reaction prephenate + S-adenosyl-L-methionine = carboxy-S-adenosyl-L-methionine + 3-phenylpyruvate + H2O. Its function is as follows. Catalyzes the conversion of S-adenosyl-L-methionine (SAM) to carboxy-S-adenosyl-L-methionine (Cx-SAM). In Helicobacter pylori (strain HPAG1), this protein is Carboxy-S-adenosyl-L-methionine synthase.